Consider the following 310-residue polypeptide: Urease accessory protein UreD (310 aa).

The protein belongs to the UreD family. UreD, UreF and UreG form a complex that acts as a GTP-hydrolysis-dependent molecular chaperone, activating the urease apoprotein by helping to assemble the nickel containing metallocenter of UreC. The UreE protein probably delivers the nickel.

It is found in the cytoplasm. In terms of biological role, required for maturation of urease via the functional incorporation of the urease nickel metallocenter. The sequence is that of Urease accessory protein UreD from Synechococcus sp. (strain RCC307).